Consider the following 236-residue polypeptide: LHFPL tetraspan subfamily member 3 protein (236 aa).

4 consecutive transmembrane segments (helical) span residues 36–56 (IGVL…VCFI), 110–130 (FFIG…TLFF), 140–160 (ICAW…MIFP), and 191–211 (ILAI…FVLG).

Belongs to the LHFP family.

It is found in the membrane. This is LHFPL tetraspan subfamily member 3 protein from Homo sapiens (Human).